Consider the following 389-residue polypeptide: P2X purinoceptor 4a (389 aa).

At 1-36 (MSESVGCCDSVSQCFFDYYTSKILIIRSKKVGTLNR) the chain is on the cytoplasmic side. The chain crosses the membrane as a helical span at residues 37-57 (FTQALVIAYVIGYVCVYNKGY). The Extracellular segment spans residues 58 to 343 (QDTDTVLSSV…NIIPTLLNMG (286 aa)). ATP contacts are provided by Lys70 and Lys72. CTP contacts are provided by Lys70 and Lys72. N-linked (GlcNAc...) asparagine glycosylation is found at Asn78 and Asn113. Intrachain disulfides connect Cys119-Cys168, Cys129-Cys152, and Cys135-Cys162. Arg143 contributes to the CTP binding site. N-linked (GlcNAc...) asparagine glycosylation is present at Asn187. 2 residues coordinate ATP: Thr189 and Leu191. Thr189 serves as a coordination point for CTP. Asn213 carries an N-linked (GlcNAc...) asparagine glycan. 2 disulfide bridges follow: Cys220-Cys230 and Cys264-Cys273. Positions 296, 298, and 316 each coordinate ATP. 3 residues coordinate CTP: Asn296, Arg298, and Lys316. Residues 344 to 364 (AGLALLGLVNVICDWIVLTFM) form a helical membrane-spanning segment. At 365–389 (KRKQHYKEQKYTYVDDFGLLHNEDK) the chain is on the cytoplasmic side.

This sequence belongs to the P2X receptor family. As to quaternary structure, functional P2XRs are organized as homomeric and heteromeric trimers. Forms homotrimer.

Its subcellular location is the cell membrane. The protein localises to the lysosome membrane. It carries out the reaction K(+)(in) = K(+)(out). The enzyme catalyses Na(+)(in) = Na(+)(out). It catalyses the reaction Ca(2+)(in) = Ca(2+)(out). With respect to regulation, activated by ATP. pH-dependent and inhibited by acidic pH. Functionally, ATP-gated nonselective transmembrane cation channel permeable to potassium, sodium and calcium. CTP, but not GTP or UTP, functions as a weak affinity agonist for P2RX4. Activated by extracellularly released ATP, it plays multiple role in immunity and central nervous system physiology. Could also function as an ATP-gated cation channel of lysosomal membranes. The chain is P2X purinoceptor 4a (p2rx4a) from Danio rerio (Zebrafish).